The sequence spans 481 residues: Bifunctional protein HldE (481 aa).

A ribokinase region spans residues 1 to 318; sequence MKVTLPDFRR…ENAIRGRAET (318 aa). 195-198 is an ATP binding site; that stretch reads NLSE. Asp-264 is an active-site residue. The cytidylyltransferase stretch occupies residues 344-481; it reads MTNGIFDILH…KRRAGQRTVV (138 aa).

This sequence in the N-terminal section; belongs to the carbohydrate kinase PfkB family. The protein in the C-terminal section; belongs to the cytidylyltransferase family. In terms of assembly, homodimer.

It catalyses the reaction D-glycero-beta-D-manno-heptose 7-phosphate + ATP = D-glycero-beta-D-manno-heptose 1,7-bisphosphate + ADP + H(+). The enzyme catalyses D-glycero-beta-D-manno-heptose 1-phosphate + ATP + H(+) = ADP-D-glycero-beta-D-manno-heptose + diphosphate. It functions in the pathway nucleotide-sugar biosynthesis; ADP-L-glycero-beta-D-manno-heptose biosynthesis; ADP-L-glycero-beta-D-manno-heptose from D-glycero-beta-D-manno-heptose 7-phosphate: step 1/4. It participates in nucleotide-sugar biosynthesis; ADP-L-glycero-beta-D-manno-heptose biosynthesis; ADP-L-glycero-beta-D-manno-heptose from D-glycero-beta-D-manno-heptose 7-phosphate: step 3/4. In terms of biological role, catalyzes the phosphorylation of D-glycero-D-manno-heptose 7-phosphate at the C-1 position to selectively form D-glycero-beta-D-manno-heptose-1,7-bisphosphate. Its function is as follows. Catalyzes the ADP transfer from ATP to D-glycero-beta-D-manno-heptose 1-phosphate, yielding ADP-D-glycero-beta-D-manno-heptose. This is Bifunctional protein HldE from Sodalis glossinidius (strain morsitans).